The chain runs to 764 residues: FAST kinase domain-containing protein 5, mitochondrial (764 aa).

The transit peptide at 1 to 27 (MAATLKSLKLVRYRAFCSPSAFGAVRS) directs the protein to the mitochondrion. Phosphoserine is present on S95. K507 bears the N6-acetyllysine mark. The 61-residue stretch at 697–757 (LAVQFTNRNQ…RLEKLAFLHE (61 aa)) folds into the RAP domain.

It belongs to the FAST kinase family. Found in a complex with GRSF1, DDX28, DHX30 and FASTKD2. Associates with the 12S mitochondrial rRNA (12S mt-rRNA). As to expression, expression detected in spleen, thymus, testis, ovary, colon, heart, smooth muscle, kidney, brain, lung, liver and white adipose tissue with highest expression in heart, smooth muscle, liver and thyroid.

Its subcellular location is the mitochondrion matrix. The protein localises to the mitochondrion nucleoid. Functionally, plays an important role in the processing of non-canonical mitochondrial mRNA precursors. The protein is FAST kinase domain-containing protein 5, mitochondrial (FASTKD5) of Homo sapiens (Human).